Reading from the N-terminus, the 571-residue chain is Putative pyruvate decarboxylase C13A11.06 (571 aa).

The pyruvate site is built by Asp-29 and His-118. Thiamine diphosphate is bound by residues Thr-395 and 418 to 420 (GSI). Asp-450 serves as a coordination point for Mg(2+). Residues 451–452 (GS) and 477–482 (NDGYTI) contribute to the thiamine diphosphate site. Mg(2+) contacts are provided by Asn-477 and Gly-479. Position 483 (Glu-483) interacts with pyruvate.

Belongs to the TPP enzyme family. As to quaternary structure, homotetramer. The cofactor is Mg(2+). Thiamine diphosphate serves as cofactor.

It catalyses the reaction a 2-oxocarboxylate + H(+) = an aldehyde + CO2. The catalysed reaction is pyruvate + H(+) = acetaldehyde + CO2. The sequence is that of Putative pyruvate decarboxylase C13A11.06 from Schizosaccharomyces pombe (strain 972 / ATCC 24843) (Fission yeast).